The following is a 215-amino-acid chain: Probable nicotinate-nucleotide adenylyltransferase (215 aa).

This sequence belongs to the NadD family.

It carries out the reaction nicotinate beta-D-ribonucleotide + ATP + H(+) = deamido-NAD(+) + diphosphate. It functions in the pathway cofactor biosynthesis; NAD(+) biosynthesis; deamido-NAD(+) from nicotinate D-ribonucleotide: step 1/1. Catalyzes the reversible adenylation of nicotinate mononucleotide (NaMN) to nicotinic acid adenine dinucleotide (NaAD). The protein is Probable nicotinate-nucleotide adenylyltransferase of Shewanella putrefaciens (strain CN-32 / ATCC BAA-453).